Here is a 316-residue protein sequence, read N- to C-terminus: Actinorhodin polyketide synthase bifunctional cyclase/dehydratase (316 aa).

Its pathway is antibiotic biosynthesis; actinorhodin biosynthesis. In terms of biological role, is needed for correct cyclization of the oligoketide leading to isochromanequinone formation. This is Actinorhodin polyketide synthase bifunctional cyclase/dehydratase from Streptomyces coelicolor (strain ATCC BAA-471 / A3(2) / M145).